The sequence spans 206 residues: MVVKKIALFGATGNTGLTTLAQAVQAGYEVTVLVRDPSRLPSEGPQPAHVVVGDVRQPADVDKTVAGQDAVIVLLGTRNDLSPTTVMSEGAQNIVAAMKAHGVDKVVACTSAFLLWDPSKVPPRLQDVTDDHIRMHKVLQQSGLKYVAVMPPHIGDHPLTGAYTVTLDGRGPSRVISKHDLGHFMLHCLTTDKYDGHTTYPSHVYE.

The NADP(+) site is built by Gly10, Thr12, Gly13, Asn14, Thr15, Arg35, Ser38, and Arg39. Ser42 carries the post-translational modification Phosphoserine. 5 residues coordinate NADP(+): Asp54, Val55, Leu75, Gly76, and Arg78. The residue at position 82 (Ser82) is a Phosphoserine. 5 residues coordinate NADP(+): Met87, Cys109, His132, His153, and Ile154. Catalysis depends on Cys109, which acts as the S-nitroso-cysteine intermediate; for S-nitroso-CoA-dependent nitrosyltransferase activity. The active-site S-nitroso-cysteine intermediate; for S-nitroso-CoA-dependent nitrosyltransferase activity is the Cys188.

Monomer. As to expression, at least expressed in the liver and erythrocyte.

The protein resides in the cytoplasm. It catalyses the reaction reduced riboflavin + NADP(+) = riboflavin + NADPH + 2 H(+). The catalysed reaction is bilirubin IXbeta + NADP(+) = biliverdin IXbeta + NADPH + H(+). It carries out the reaction FMNH2 + NAD(+) = FMN + NADH + 2 H(+). The enzyme catalyses FMNH2 + NADP(+) = FMN + NADPH + 2 H(+). It catalyses the reaction S-nitroso-CoA + L-cysteinyl-[protein] = S-nitroso-L-cysteinyl-[protein] + CoA. The catalysed reaction is L-cysteinyl-[SCAN] + S-nitroso-CoA = S-nitroso-L-cysteinyl-[SCAN] + CoA. It carries out the reaction S-nitroso-L-cysteinyl-[SCAN] + L-cysteinyl-[protein] = L-cysteinyl-[SCAN] + S-nitroso-L-cysteinyl-[protein]. Enzyme that can both act as a NAD(P)H-dependent reductase and a S-nitroso-CoA-dependent nitrosyltransferase. Promotes fetal heme degradation during development. Also expressed in adult tissues, where it acts as a regulator of hematopoiesis, intermediary metabolism (glutaminolysis, glycolysis, TCA cycle and pentose phosphate pathway) and insulin signaling. Has a broad specificity oxidoreductase activity by catalyzing the NAD(P)H-dependent reduction of a variety of flavins, such as riboflavin, FAD or FMN, biliverdins, methemoglobin and PQQ (pyrroloquinoline quinone). Contributes to fetal heme catabolism by catalyzing reduction of biliverdin IXbeta into bilirubin IXbeta in the liver. Biliverdin IXbeta, which constitutes the major heme catabolite in the fetus is not present in adult. Does not reduce bilirubin IXalpha. Can also reduce the complexed Fe(3+) iron to Fe(2+) in the presence of FMN and NADPH. Acts as a protein nitrosyltransferase by catalyzing nitrosylation of cysteine residues of target proteins, such as HMOX2, INSR and IRS1. S-nitroso-CoA-dependent nitrosyltransferase activity is mediated via a 'ping-pong' mechanism: BLVRB first associates with both S-nitroso-CoA and protein substrate, nitric oxide group is then transferred from S-nitroso-CoA to Cys-109 and Cys-188 residues of BLVRB and from S-nitroso-BLVRB to the protein substrate. Inhibits insulin signaling by mediating nitrosylation of INSR and IRS1, leading to their inhibition. This chain is Flavin reductase (NADPH) (BLVRB), found in Bos taurus (Bovine).